The primary structure comprises 492 residues: SH2 domain-containing adapter protein E (492 aa).

Disordered regions lie at residues Thr46–Lys193, Lys214–Asp236, Leu260–Trp332, and Phe347–Pro384. At Ser103 the chain carries Phosphoserine. The span at Ile149–Gly158 shows a compositional bias: basic and acidic residues. Over residues Thr168 to Ser184 the composition is skewed to low complexity. 5 stretches are compositionally biased toward basic and acidic residues: residues Lys214–Glu227, Glu268–Leu285, Ala306–Trp332, Gly349–Arg361, and Leu373–Asp383. The 96-residue stretch at Trp393–Val488 folds into the SH2 domain.

As to expression, expressed in heart, brain, lung and skeletal muscle.

The chain is SH2 domain-containing adapter protein E (She) from Mus musculus (Mouse).